Reading from the N-terminus, the 225-residue chain is Cold-regulated 413 inner membrane protein 1, chloroplastic (225 aa).

The N-terminal 76 residues, 1-76 (MASLCLSSSR…RKRGSSVVCY (76 aa)), are a transit peptide targeting the chloroplast. Position 77 (Ala-77) is a topological domain, stromal. Residues 78-98 (APISANSLQWISTISCLALML) form a helical membrane-spanning segment. Topologically, residues 99–102 (ARGT) are chloroplast intermembrane. The helical transmembrane segment at 103–123 (GIHKSVVVPLFALHAPSSIVA) threads the bilayer. The Stromal portion of the chain corresponds to 124–128 (WIKGE). The chain crosses the membrane as a helical span at residues 129-149 (YGVWAAFLALIARLFFTFPGE). Residues 150–151 (LE) are Chloroplast intermembrane-facing. A helical transmembrane segment spans residues 152–172 (LPFIALLLVIVAPYQVMNIRG). The Stromal portion of the chain corresponds to 173 to 175 (KQE). Residues 176–196 (GAIIAIAISGFLAFQHFSRAG) traverse the membrane as a helical segment. Residues 197–204 (SLEKAYEK) are Chloroplast intermembrane-facing. Residues 205–225 (GSVLATVAIIGVTVVSLLLLL) form a helical membrane-spanning segment.

The protein belongs to the Cold-regulated 413 protein family.

Its subcellular location is the plastid. The protein localises to the chloroplast inner membrane. The polypeptide is Cold-regulated 413 inner membrane protein 1, chloroplastic (COR413IM1) (Arabidopsis thaliana (Mouse-ear cress)).